We begin with the raw amino-acid sequence, 396 residues long: G-protein coupled receptor 84 (396 aa).

Topologically, residues Met-1–Trp-26 are extracellular. 2 N-linked (GlcNAc...) asparagine glycosylation sites follow: Asn-3 and Asn-8. The helical transmembrane segment at Gly-27–Ile-47 threads the bilayer. At Gln-48–Leu-57 the chain is on the cytoplasmic side. The helical transmembrane segment at Leu-58–Val-78 threads the bilayer. Residues Asp-79–Arg-94 are Extracellular-facing. The helical transmembrane segment at Val-95–Ala-115 threads the bilayer. The Cytoplasmic portion of the chain corresponds to Leu-116–Thr-144. A helical membrane pass occupies residues Trp-145 to Val-165. Residues Cys-166–Thr-180 are Extracellular-facing. Residues Ile-181–Ile-201 traverse the membrane as a helical segment. Topologically, residues His-202–Met-320 are cytoplasmic. Ser-221 and Ser-224 each carry phosphoserine. The interval Arg-244–Ser-311 is disordered. Over residues Ser-247 to Ser-260 the composition is skewed to low complexity. Thr-263 and Thr-264 each carry phosphothreonine. The chain crosses the membrane as a helical span at residues Cys-321–Leu-341. Topologically, residues Asp-342–His-352 are extracellular. The helical transmembrane segment at Met-353 to Met-373 threads the bilayer. Over Asn-374 to His-396 the chain is Cytoplasmic.

Belongs to the G-protein coupled receptor 1 family. As to quaternary structure, interacts with ARRB2 and ARR3. Phosphorylated by a subset of GPR84-activating ligands. Constitutively phosphorylated at Ser-221 and Ser-224 in the absence of 2-HTP. By contrast, Thr-263 and Thr-264 are phosphorylated only following prior cell treatment with 2-HTP. As to expression, expressed predominantly in hematopoietic tissues. High levels detected in the bone marrow and lower levels in the peripheral leukocytes and lung. Also expressed in brain, heart, muscle, colon, thymus, spleen, kidney, liver, placenta and intestine. Within the leukocyte population expression is higher in neutrophils and eosinophils relative to T- or B-lymphocytes.

It is found in the cell membrane. Its function is as follows. G protein-coupled receptor that responds endogenously to dietary fatty acids or nutrient, specifically medium-chain free fatty acid (FFA) with carbon chain lengths of C9 to C14. Capric acid (C10:0), undecanoic acid (C11:0) and lauric acid (C12:0) are the most potent agonists. In immune cells, functions as a pro-inflammatory receptor via 6-OAU and promotes the expression of pro-inflammatory mediators such as TNFalpha, IL-6 and IL-12B as well as stimulating chemotactic responses through activation of signaling mediators AKT, ERK and NF-kappa-B. In addition, triggers increased bacterial adhesion and phagocytosis in macrophages and regulates pro-inflammatory function via enhancing NLRP3 inflammasome activation. Also plays an important role in inflammation by modulating neutrophil functions. Mechanistically, promotes neutrophil chemotaxis, reactive oxygen species (ROS) production and degranulation via LYN-AKT/ERK pathway. To regulate ROS, communicates with the two formyl peptide receptors FPR2 and FPR1 to control the NADPH oxidase activity in neutrophils. This chain is G-protein coupled receptor 84 (GPR84), found in Homo sapiens (Human).